Reading from the N-terminus, the 264-residue chain is ATP synthase subunit a (264 aa).

6 consecutive transmembrane segments (helical) span residues 27–47, 87–107, 131–151, 172–192, 196–216, and 230–250; these read VHLD…FVFS, VGPL…IDLI, DISG…FYTI, LLIP…PVSL, LFGN…MYMA, and LAWA…FMML.

Belongs to the ATPase A chain family. As to quaternary structure, F-type ATPases have 2 components, CF(1) - the catalytic core - and CF(0) - the membrane proton channel. CF(1) has five subunits: alpha(3), beta(3), gamma(1), delta(1), epsilon(1). CF(0) has three main subunits: a(1), b(2) and c(9-12). The alpha and beta chains form an alternating ring which encloses part of the gamma chain. CF(1) is attached to CF(0) by a central stalk formed by the gamma and epsilon chains, while a peripheral stalk is formed by the delta and b chains.

It localises to the cell inner membrane. Its function is as follows. Key component of the proton channel; it plays a direct role in the translocation of protons across the membrane. The sequence is that of ATP synthase subunit a from Pasteurella multocida (strain Pm70).